The following is a 476-amino-acid chain: MNFETIIGLEVHVELKTNSKIFSASPTEFGADPNTQTSVIDLGYPGVLPTLNKEAVNFAMKAAMALNCEIATETKFDRKNYFYPDNPKAYQISQFDKPIGQNGWIEIEVGGQKKRIGITRLHLEEDAGKSTHTGEGYSLVDYNRQGLPLIEIVSEPDMRTPEEAYAYLEKLKSIIQYTGVSDCKMEEGSLRCDANISLRPVGQEKFGTKAELKNLNSFTYVQKGLEFEQARQEKELLSGGIIQQETRRYDEATKKTILMRVKEGSDDYRYFPEPDLVELYIDEEWKEQVRASIPELPDARKARYVAELGLPAYDAHVLTLTKEMSDFFEETVAGGADAKLASNWLMGEVLAYLNKQQKELKDVALTPAGLSKMIQLIEKGTISSKIAKKVFNELIEKGGDPEEIVKAKGLVQISDEGTLRKIVTEILDNNAQSIEDFKNGKDRAIGFLVGQIMKATKGQANPPLVNKILLEEINKR.

The protein belongs to the GatB/GatE family. GatB subfamily. In terms of assembly, heterotrimer of A, B and C subunits.

It carries out the reaction L-glutamyl-tRNA(Gln) + L-glutamine + ATP + H2O = L-glutaminyl-tRNA(Gln) + L-glutamate + ADP + phosphate + H(+). The enzyme catalyses L-aspartyl-tRNA(Asn) + L-glutamine + ATP + H2O = L-asparaginyl-tRNA(Asn) + L-glutamate + ADP + phosphate + 2 H(+). Functionally, allows the formation of correctly charged Asn-tRNA(Asn) or Gln-tRNA(Gln) through the transamidation of misacylated Asp-tRNA(Asn) or Glu-tRNA(Gln) in organisms which lack either or both of asparaginyl-tRNA or glutaminyl-tRNA synthetases. The reaction takes place in the presence of glutamine and ATP through an activated phospho-Asp-tRNA(Asn) or phospho-Glu-tRNA(Gln). The chain is Aspartyl/glutamyl-tRNA(Asn/Gln) amidotransferase subunit B from Bacillus cytotoxicus (strain DSM 22905 / CIP 110041 / 391-98 / NVH 391-98).